We begin with the raw amino-acid sequence, 3625 residues long: Cubilin (3625 aa).

Positions M1–A20 are cleaved as a signal peptide. The propeptide at E21–R36 is removed in mature form. An interaction with AMN region spans residues P43–G50. N-linked (GlcNAc...) asparagine glycosylation is present at N106. The 37-residue stretch at D133–S169 folds into the EGF-like 1 domain. 6 disulfide bridges follow: C137–C148, C142–C157, C159–C168, C175–C191, C185–C200, and C202–C211. The EGF-like 2; calcium-binding domain maps to D171–A212. N-linked (GlcNAc...) asparagine glycosylation is present at N257. Residues D264–E305 enclose the EGF-like 3; calcium-binding domain. 20 disulfides stabilise this stretch: C268–C281, C275–C290, C293–C304, C310–C325, C317–C334, C337–C348, C354–C367, C361–C377, C379–C393, C400–C410, C405–C419, C421–C430, C437–C448, C442–C457, C459–C468, C475–C501, C528–C550, C591–C617, C644–C666, and C709–C734. An EGF-like 4; calcium-binding domain is found at D306–T349. EGF-like domains are found at residues L350–V394 and L396–T431. The N-linked (GlcNAc...) asparagine glycan is linked to N429. The EGF-like 7; calcium-binding domain maps to N433–H469. CUB domains follow at residues C475–R587, C591–T703, C709–A816, C817–E928, C932–T1042, S1045–S1163, C1167–T1279, C1280–H1391, C1393–V1508, C1512–A1621, C1622–S1736, C1740–I1852, G1854–M1965, C1980–S2093, C2094–K2215, C2219–A2336, C2338–S2450, C2454–S2567, C2572–T2689, C2691–E2803, C2807–R2921, C2922–T3037, C3039–T3152, C3159–L3276, C3280–C3397, C3397–S3509, and C3513–S3625. 2 N-linked (GlcNAc...) asparagine glycosylation sites follow: N712 and N749. A disulfide bond links C761 and C779. An N-linked (GlcNAc...) asparagine glycan is attached at N781. A disulfide bond links C817 and C842. N-linked (GlcNAc...) asparagine glycosylation occurs at N857. 2 cysteine pairs are disulfide-bonded: C869/C891 and C932/C958. N-linked (GlcNAc...) asparagine glycosylation is present at N957. A Ca(2+)-binding site is contributed by E980. N984 is a glycosylation site (N-linked (GlcNAc...) asparagine). C985 and C1005 are oxidised to a cystine. Ca(2+)-binding residues include D988, D1027, D1029, and L1030. A glycan (N-linked (GlcNAc...) asparagine) is linked at N1048. The Ca(2+) site is built by E1097, D1107, and D1148. C1104 and C1126 are oxidised to a cystine. C1167 and C1193 are oxidised to a cystine. A glycan (N-linked (GlcNAc...) asparagine) is linked at N1170. E1215 contributes to the Ca(2+) binding site. An N-linked (GlcNAc...) asparagine glycan is attached at N1219. Residues C1220 and C1242 are joined by a disulfide bond. 4 residues coordinate Ca(2+): D1223, D1264, G1266, and Q1267. C1280 and C1308 form a disulfide bridge. N1287, N1309, and N1321 each carry an N-linked (GlcNAc...) asparagine glycan. Residue E1330 participates in Ca(2+) binding. Residue N1334 is glycosylated (N-linked (GlcNAc...) asparagine). The cysteines at positions 1335 and 1353 are disulfide-linked. Ca(2+) contacts are provided by D1338, D1375, and V1377. 2 cysteine pairs are disulfide-bonded: C1393/C1419 and C1446/C1468. Residue N1502 is glycosylated (N-linked (GlcNAc...) asparagine). C1512 and C1538 are disulfide-bonded. The N-linked (GlcNAc...) asparagine glycan is linked to N1553. Cystine bridges form between C1565–C1583, C1622–C1649, C1677–C1699, C1740–C1766, and C1793–C1814. N1648 carries an N-linked (GlcNAc...) asparagine glycan. N-linked (GlcNAc...) asparagine glycosylation is found at N1804, N1821, and N1887. Intrachain disulfides connect C1907-C1929, C1980-C2008, and C2034-C2056. 2 N-linked (GlcNAc...) asparagine glycosylation sites follow: N2087 and N2119. 2 cysteine pairs are disulfide-bonded: C2094–C2120 and C2219–C2249. An N-linked (GlcNAc...) asparagine glycan is attached at N2276. Disulfide bonds link C2277–C2299 and C2338–C2365. N2388 and N2402 each carry an N-linked (GlcNAc...) asparagine glycan. Cystine bridges form between C2392–C2413, C2454–C2480, and C2507–C2529. N2533, N2583, N2594, and N2612 each carry an N-linked (GlcNAc...) asparagine glycan. C2572 and C2601 form a disulfide bridge. 5 disulfide bridges follow: C2630–C2651, C2691–C2717, C2744–C2766, C2807–C2833, and C2862–C2885. 4 N-linked (GlcNAc...) asparagine glycosylation sites follow: N2887, N2925, N2928, and N2947. 2 disulfides stabilise this stretch: C2922–C2948 and C2979–C3001. The residue at position 3010 (T3010) is a Phosphothreonine. 2 disulfides stabilise this stretch: C3039-C3066 and C3093-C3115. N-linked (GlcNAc...) asparagine glycans are attached at residues N3044, N3105, and N3127. Cystine bridges form between C3159-C3187 and C3217-C3239. 2 N-linked (GlcNAc...) asparagine glycosylation sites follow: N3270 and N3285. 2 disulfides stabilise this stretch: C3280/C3308 and C3334/C3356. N-linked (GlcNAc...) asparagine glycosylation occurs at N3359. C3397 and C3423 are disulfide-bonded. Residues N3432, N3459, and N3535 are each glycosylated (N-linked (GlcNAc...) asparagine). 3 cysteine pairs are disulfide-bonded: C3450-C3472, C3513-C3539, and C3566-C3588.

As to quaternary structure, interacts with AMN. Component of the cubam complex composed of one CUBN trimer and one AMN chain. The cubam complex can dimerize. Interacts with LRP2 in a dual-receptor complex in a calcium-dependent manner. Found in a complex with PID1/PCLI1, LRP1 and CUBNI. Interacts with LRP1 and PID1/PCLI1. The precursor is cleaved by a trans-Golgi proteinase furin, removing a propeptide. Post-translationally, N-glycosylated. Detected in kidney cortex (at protein level).

Its subcellular location is the apical cell membrane. It localises to the cell membrane. The protein localises to the membrane. It is found in the coated pit. The protein resides in the endosome. Its subcellular location is the lysosome membrane. Its function is as follows. Endocytic receptor which plays a role in lipoprotein, vitamin and iron metabolism by facilitating their uptake. Acts together with LRP2 to mediate endocytosis of high-density lipoproteins, GC, hemoglobin, ALB, TF and SCGB1A1. Acts together with AMN to mediate endocytosis of the CBLIF-cobalamin complex. Binds to ALB, MB, Kappa and lambda-light chains, TF, hemoglobin, GC, SCGB1A1, APOA1, high density lipoprotein, and the CBLIF-cobalamin complex. Ligand binding requires calcium. Serves as important transporter in several absorptive epithelia, including intestine, renal proximal tubules and embryonic yolk sac. May play an important role in the development of the peri-implantation embryo through internalization of APOA1 and cholesterol. Binds to LGALS3 at the maternal-fetal interface. The chain is Cubilin (CUBN) from Sus scrofa (Pig).